A 129-amino-acid chain; its full sequence is MCIFCKIINGEIPAKVVYEDEHVLAFLDINPRNKGHTLVVPKKHYERFDEMPDDELCNFIKGVKKTVEVLKKLGFDGYNIVNNNGRVAGQEVNHVHFHIIPRYEGDGEVVKFGEVKNVDLDEVLKEIKG.

Residues 3-109 (IFCKIINGEI…IPRYEGDGEV (107 aa)) enclose the HIT domain. Residues 94–98 (HVHFH) carry the Histidine triad motif motif.

This is an uncharacterized protein from Methanocaldococcus jannaschii (strain ATCC 43067 / DSM 2661 / JAL-1 / JCM 10045 / NBRC 100440) (Methanococcus jannaschii).